The following is a 446-amino-acid chain: Glutamyl-tRNA reductase (446 aa).

Substrate contacts are provided by residues 49 to 52 (TCNR), serine 109, 114 to 116 (ETQ), and glutamine 120. Cysteine 50 (nucleophile) is an active-site residue. Residue 189-194 (GAGETG) coordinates NADP(+).

This sequence belongs to the glutamyl-tRNA reductase family. As to quaternary structure, homodimer.

The catalysed reaction is (S)-4-amino-5-oxopentanoate + tRNA(Glu) + NADP(+) = L-glutamyl-tRNA(Glu) + NADPH + H(+). The protein operates within porphyrin-containing compound metabolism; protoporphyrin-IX biosynthesis; 5-aminolevulinate from L-glutamyl-tRNA(Glu): step 1/2. In terms of biological role, catalyzes the NADPH-dependent reduction of glutamyl-tRNA(Glu) to glutamate 1-semialdehyde (GSA). The polypeptide is Glutamyl-tRNA reductase (Exiguobacterium sibiricum (strain DSM 17290 / CCUG 55495 / CIP 109462 / JCM 13490 / 255-15)).